A 303-amino-acid chain; its full sequence is UDP-N-acetylenolpyruvoylglucosamine reductase (303 aa).

The FAD-binding PCMH-type domain occupies 23–188 (KVGGPADYLV…ISAKFALKPG (166 aa)). Residue Arg-167 is part of the active site. Catalysis depends on Ser-217, which acts as the Proton donor. The active site involves Glu-287.

The protein belongs to the MurB family. It depends on FAD as a cofactor.

It is found in the cytoplasm. The enzyme catalyses UDP-N-acetyl-alpha-D-muramate + NADP(+) = UDP-N-acetyl-3-O-(1-carboxyvinyl)-alpha-D-glucosamine + NADPH + H(+). It participates in cell wall biogenesis; peptidoglycan biosynthesis. Cell wall formation. This Streptococcus uberis (strain ATCC BAA-854 / 0140J) protein is UDP-N-acetylenolpyruvoylglucosamine reductase.